A 228-amino-acid polypeptide reads, in one-letter code: MQLTNPNRDRKAVVIFSGGQDSTTCLFQAIQDYGVENVEVVTFQYGQRHAIELEKAKWIAQDLGVKQTLIDTSVIKAITQNALMDEQARIEQHGSTPNTFVDGRNALFLLYTAIYAKGQGIQDIITGVCETDFSGYPDCRDVFIKSMNVTLNLAMDYQFHLKTPLMYLTKAQTWQLADELGVLDYIRQHTHTCYMGVEQGCGECPSCVLREKGLREYLSSKSEAEIDV.

16–26 (FSGGQDSTTCL) contributes to the ATP binding site. The Zn(2+) site is built by Cys193, Cys201, Cys204, and Cys207.

Belongs to the QueC family. Requires Zn(2+) as cofactor.

The enzyme catalyses 7-carboxy-7-deazaguanine + NH4(+) + ATP = 7-cyano-7-deazaguanine + ADP + phosphate + H2O + H(+). Its pathway is purine metabolism; 7-cyano-7-deazaguanine biosynthesis. Its function is as follows. Catalyzes the ATP-dependent conversion of 7-carboxy-7-deazaguanine (CDG) to 7-cyano-7-deazaguanine (preQ(0)). This chain is 7-cyano-7-deazaguanine synthase, found in Pasteurella multocida (strain Pm70).